The primary structure comprises 378 residues: Ubiquitin-conjugating enzyme E2 Q2 (378 aa).

The segment at 126–152 (DQPLPTGQNGTTEEVTSEEEEEEEMAE) is disordered. The span at 140–152 (VTSEEEEEEEMAE) shows a compositional bias: acidic residues. Residues 207–371 (QASDRLMKEL…VQIHEKNGWY (165 aa)) enclose the UBC core domain. Cys307 (glycyl thioester intermediate) is an active-site residue.

It belongs to the ubiquitin-conjugating enzyme family. In terms of processing, auto-ubiquitinated in vitro.

The protein localises to the cytoplasm. The catalysed reaction is S-ubiquitinyl-[E1 ubiquitin-activating enzyme]-L-cysteine + [E2 ubiquitin-conjugating enzyme]-L-cysteine = [E1 ubiquitin-activating enzyme]-L-cysteine + S-ubiquitinyl-[E2 ubiquitin-conjugating enzyme]-L-cysteine.. It functions in the pathway protein modification; protein ubiquitination. Functionally, accepts ubiquitin from the E1 complex and catalyzes its covalent attachment to other proteins. In vitro catalyzes 'Lys-48'-linked polyubiquitination. The protein is Ubiquitin-conjugating enzyme E2 Q2 (Ube2q2) of Mus musculus (Mouse).